The sequence spans 502 residues: ATP synthase subunit alpha (502 aa).

An ATP-binding site is contributed by 169–176; the sequence is GDRQTGKT.

The protein belongs to the ATPase alpha/beta chains family. F-type ATPases have 2 components, CF(1) - the catalytic core - and CF(0) - the membrane proton channel. CF(1) has five subunits: alpha(3), beta(3), gamma(1), delta(1), epsilon(1). CF(0) has three main subunits: a(1), b(2) and c(9-12). The alpha and beta chains form an alternating ring which encloses part of the gamma chain. CF(1) is attached to CF(0) by a central stalk formed by the gamma and epsilon chains, while a peripheral stalk is formed by the delta and b chains.

It localises to the cell inner membrane. The enzyme catalyses ATP + H2O + 4 H(+)(in) = ADP + phosphate + 5 H(+)(out). Produces ATP from ADP in the presence of a proton gradient across the membrane. The alpha chain is a regulatory subunit. The protein is ATP synthase subunit alpha of Pelobacter propionicus (strain DSM 2379 / NBRC 103807 / OttBd1).